Reading from the N-terminus, the 382-residue chain is Pyrimidine monooxygenase RutA (382 aa).

FMN-binding positions include 68–69, Asn134, Glu143, 159–160, and Ser209; these read IK and RY.

This sequence belongs to the NtaA/SnaA/DszA monooxygenase family. RutA subfamily.

The catalysed reaction is uracil + FMNH2 + NADH + O2 = (Z)-3-ureidoacrylate + FMN + NAD(+) + H2O + H(+). The enzyme catalyses thymine + FMNH2 + NADH + O2 = (Z)-2-methylureidoacrylate + FMN + NAD(+) + H2O + H(+). In terms of biological role, catalyzes the pyrimidine ring opening between N-3 and C-4 by an unusual flavin hydroperoxide-catalyzed mechanism, adding oxygen atoms in the process to yield ureidoacrylate peracid, that immediately reacts with FMN forming ureidoacrylate and FMN-N(5)-oxide. The FMN-N(5)-oxide reacts spontaneously with NADH to produce FMN. Requires the flavin reductase RutF to regenerate FMN in vivo. This Escherichia coli (strain 55989 / EAEC) protein is Pyrimidine monooxygenase RutA.